The sequence spans 315 residues: Serpentine receptor class delta-31 (315 aa).

Helical transmembrane passes span 6 to 26 (LHSI…YLAI), 38 to 58 (AIIT…FFVM), 83 to 103 (ACYV…IWMI), 124 to 144 (VFVA…WFSI), 174 to 194 (ITLI…YIWI), 225 to 245 (FQVF…SMFT), and 256 to 276 (AISV…ILFV).

It belongs to the nematode receptor-like protein srd family.

The protein resides in the membrane. This Caenorhabditis elegans protein is Serpentine receptor class delta-31 (srd-31).